The primary structure comprises 130 residues: Large ribosomal subunit protein uL22 (130 aa).

Belongs to the universal ribosomal protein uL22 family. As to quaternary structure, part of the 50S ribosomal subunit.

Functionally, this protein binds specifically to 23S rRNA; its binding is stimulated by other ribosomal proteins, e.g. L4, L17, and L20. It is important during the early stages of 50S assembly. It makes multiple contacts with different domains of the 23S rRNA in the assembled 50S subunit and ribosome. The globular domain of the protein is located near the polypeptide exit tunnel on the outside of the subunit, while an extended beta-hairpin is found that lines the wall of the exit tunnel in the center of the 70S ribosome. This chain is Large ribosomal subunit protein uL22, found in Clavibacter michiganensis subsp. michiganensis (strain NCPPB 382).